A 189-amino-acid polypeptide reads, in one-letter code: Pyridoxal 5'-phosphate synthase subunit PdxT (189 aa).

47 to 49 is an L-glutamine binding site; sequence GES. The Nucleophile role is filled by cysteine 79. L-glutamine is bound by residues arginine 106 and 135 to 136; that span reads IR. Residues histidine 171 and glutamate 173 each act as charge relay system in the active site.

The protein belongs to the glutaminase PdxT/SNO family. In terms of assembly, in the presence of PdxS, forms a dodecamer of heterodimers. Only shows activity in the heterodimer.

It carries out the reaction aldehydo-D-ribose 5-phosphate + D-glyceraldehyde 3-phosphate + L-glutamine = pyridoxal 5'-phosphate + L-glutamate + phosphate + 3 H2O + H(+). The catalysed reaction is L-glutamine + H2O = L-glutamate + NH4(+). It participates in cofactor biosynthesis; pyridoxal 5'-phosphate biosynthesis. Its function is as follows. Catalyzes the hydrolysis of glutamine to glutamate and ammonia as part of the biosynthesis of pyridoxal 5'-phosphate. The resulting ammonia molecule is channeled to the active site of PdxS. This chain is Pyridoxal 5'-phosphate synthase subunit PdxT, found in Caldanaerobacter subterraneus subsp. tengcongensis (strain DSM 15242 / JCM 11007 / NBRC 100824 / MB4) (Thermoanaerobacter tengcongensis).